A 155-amino-acid chain; its full sequence is Transcription antitermination protein NusB (155 aa).

It belongs to the NusB family.

Its function is as follows. Involved in transcription antitermination. Required for transcription of ribosomal RNA (rRNA) genes. Binds specifically to the boxA antiterminator sequence of the ribosomal RNA (rrn) operons. In Aliivibrio fischeri (strain ATCC 700601 / ES114) (Vibrio fischeri), this protein is Transcription antitermination protein NusB.